The primary structure comprises 87 residues: Cuticle protein 1 (87 aa).

Glutamine 1 bears the Pyrrolidone carboxylic acid mark. 3 tandem repeats follow at residues 5-20, 43-58, and 71-86. Disulfide bonds link cysteine 14–cysteine 20, cysteine 52–cysteine 58, and cysteine 80–cysteine 86.

This is Cuticle protein 1 from Blaberus craniifer (Death's head cockroach).